The following is a 507-amino-acid chain: Lysine--tRNA ligase (507 aa).

Mg(2+)-binding residues include Glu-416 and Glu-423.

It belongs to the class-II aminoacyl-tRNA synthetase family. In terms of assembly, homodimer. The cofactor is Mg(2+).

It localises to the cytoplasm. It carries out the reaction tRNA(Lys) + L-lysine + ATP = L-lysyl-tRNA(Lys) + AMP + diphosphate. The chain is Lysine--tRNA ligase from Hahella chejuensis (strain KCTC 2396).